Consider the following 497-residue polypeptide: 3-octaprenyl-4-hydroxybenzoate carboxy-lyase (497 aa).

N175 is a Mn(2+) binding site. Residues 178–180 (IYR), 192–194 (RWL), and 197–198 (RG) each bind prenylated FMN. E241 lines the Mn(2+) pocket. D290 functions as the Proton donor in the catalytic mechanism.

The protein belongs to the UbiD family. As to quaternary structure, homohexamer. Prenylated FMN serves as cofactor. Requires Mn(2+) as cofactor.

It is found in the cell membrane. The catalysed reaction is a 4-hydroxy-3-(all-trans-polyprenyl)benzoate + H(+) = a 2-(all-trans-polyprenyl)phenol + CO2. It functions in the pathway cofactor biosynthesis; ubiquinone biosynthesis. Functionally, catalyzes the decarboxylation of 3-octaprenyl-4-hydroxy benzoate to 2-octaprenylphenol, an intermediate step in ubiquinone biosynthesis. The sequence is that of 3-octaprenyl-4-hydroxybenzoate carboxy-lyase from Shigella sonnei (strain Ss046).